The primary structure comprises 309 residues: HPr kinase/phosphorylase (309 aa).

Residues histidine 139 and lysine 160 contribute to the active site. 154 to 161 (GESGIGKS) lines the ATP pocket. Serine 161 provides a ligand contact to Mg(2+). The active-site Proton acceptor; for phosphorylation activity. Proton donor; for dephosphorylation activity is the aspartate 178. An important for the catalytic mechanism of both phosphorylation and dephosphorylation region spans residues 202–211 (IELRGIGIID). Glutamate 203 lines the Mg(2+) pocket. Arginine 244 is a catalytic residue. Residues 265–270 (PIRPGR) form an important for the catalytic mechanism of dephosphorylation region.

The protein belongs to the HPrK/P family. Homohexamer. It depends on Mg(2+) as a cofactor.

It carries out the reaction [HPr protein]-L-serine + ATP = [HPr protein]-O-phospho-L-serine + ADP + H(+). It catalyses the reaction [HPr protein]-O-phospho-L-serine + phosphate + H(+) = [HPr protein]-L-serine + diphosphate. In terms of biological role, catalyzes the ATP- as well as the pyrophosphate-dependent phosphorylation of a specific serine residue in HPr, a phosphocarrier protein of the phosphoenolpyruvate-dependent sugar phosphotransferase system (PTS). HprK/P also catalyzes the pyrophosphate-producing, inorganic phosphate-dependent dephosphorylation (phosphorolysis) of seryl-phosphorylated HPr (P-Ser-HPr). The two antagonistic activities of HprK/P are regulated by several intracellular metabolites, which change their concentration in response to the absence or presence of rapidly metabolisable carbon sources (glucose, fructose, etc.) in the growth medium. Therefore, by controlling the phosphorylation state of HPr, HPrK/P is a sensor enzyme that plays a major role in the regulation of carbon metabolism and sugar transport: it mediates carbon catabolite repression (CCR), and regulates PTS-catalyzed carbohydrate uptake and inducer exclusion. This Lachnoclostridium phytofermentans (strain ATCC 700394 / DSM 18823 / ISDg) (Clostridium phytofermentans) protein is HPr kinase/phosphorylase.